We begin with the raw amino-acid sequence, 599 residues long: Proline dehydrogenase 1, mitochondrial (599 aa).

Disordered stretches follow at residues 20 to 39 (STKPQAQEQPPASPEALRGC) and 152 to 180 (EEAERKEMESCTSEAERDGSGANKREKQY). Over residues 23-39 (PQAQEQPPASPEALRGC) the composition is skewed to low complexity. Residues 153–180 (EAERKEMESCTSEAERDGSGANKREKQY) are compositionally biased toward basic and acidic residues. K356, K367, and K485 each carry N6-acetyllysine.

Belongs to the proline oxidase family. The cofactor is FAD. In terms of tissue distribution, expressed in liver, kidney, heart and to a lesser extent in brain, lung and muscle.

It is found in the mitochondrion matrix. It catalyses the reaction L-proline + a quinone = (S)-1-pyrroline-5-carboxylate + a quinol + H(+). The protein operates within amino-acid degradation; L-proline degradation into L-glutamate; L-glutamate from L-proline: step 1/2. In terms of biological role, converts proline to delta-1-pyrroline-5-carboxylate. The polypeptide is Proline dehydrogenase 1, mitochondrial (Prodh) (Mus musculus (Mouse)).